Consider the following 95-residue polypeptide: Late cornified envelope protein 3B (95 aa).

Over residues 1–13 (MSCQQNQQQCQPL) the composition is skewed to low complexity. Disordered stretches follow at residues 1–29 (MSCQ…SAQC) and 68–95 (RQSS…GGCC).

It belongs to the LCE family. As to expression, skin-specific. Expression was readily detected in adult trunk skin, adult arm skin, fetal skin, penal skin, vulva, esophagus and tongue. Not expressed in the cervix, rectum, lung, colon, or placenta.

In terms of biological role, a structural component of the cornified envelope of the stratum corneum involved in innate cutaneous host defense. Possesses defensin-like antimicrobial activity against a broad spectrum of Gram-positive and Gram-negative bacteria, both aerobic and anaerobic species. Upon inflammation, may regulate skin barrier repair by shaping cutaneous microbiota composition and immune response to bacterial antigens. The protein is Late cornified envelope protein 3B of Homo sapiens (Human).